Consider the following 414-residue polypeptide: Putative dipeptidase ARB_02715 (414 aa).

An N-terminal signal peptide occupies residues 1–20 (MAALFVSLLALTSLVPVQGA). Zn(2+) is bound by residues H45, D47, and E157. C96 and C186 are oxidised to a cystine. Residue H184 coordinates substrate. Residues H228 and H249 each coordinate Zn(2+). Positions 260 and 320 each coordinate substrate. N-linked (GlcNAc...) asparagine glycosylation is present at N392.

Belongs to the metallo-dependent hydrolases superfamily. Peptidase M19 family. Zn(2+) is required as a cofactor.

The catalysed reaction is an L-aminoacyl-L-amino acid + H2O = 2 an L-alpha-amino acid. Its function is as follows. Hydrolyzes a wide range of dipeptides. This is Putative dipeptidase ARB_02715 from Arthroderma benhamiae (strain ATCC MYA-4681 / CBS 112371) (Trichophyton mentagrophytes).